Here is a 423-residue protein sequence, read N- to C-terminus: MSIKLQPVKGSKDLLPEEFGKHDYIVSVSRNLSQLYGFQPISTPIIEYTEIFNRTLGKDSDVLSKEMYVFLDKGNRSVSLRPEFTASIMRAVIYNNLQNKKLPLKYFSSGPAFRYDNPQAGRQRQFHQINLECIGDDSPFSDAEIVLLAHDILKTLNLVDKVNLEINSLGCMESRAKYQQALVEYFSKYRTELSQDSQSRLIENPLRILDSKNLHDKKISASAPSIHDYYTIKSRCYFDKVLEYLEFCGIKYTINANLVRGLDYYCHTVFEYTSTQIGAQSTVLGGGRYDGLFEQMGGKLASGKKTLPAIGFAAGIERLALLTNYTPVDVRPIVIIPVDEEHHQHGIMLLQKLRNNNITTVIDLQDSISKRLNRANYIKASKVIFIGAIEVREQSYRIKDLDTSNECVIIHNELLSYLQNNCS.

It belongs to the class-II aminoacyl-tRNA synthetase family. As to quaternary structure, homodimer.

It localises to the cytoplasm. It catalyses the reaction tRNA(His) + L-histidine + ATP = L-histidyl-tRNA(His) + AMP + diphosphate + H(+). This Orientia tsutsugamushi (strain Ikeda) (Rickettsia tsutsugamushi) protein is Histidine--tRNA ligase.